Consider the following 145-residue polypeptide: Cell division protein SepF (145 aa).

It belongs to the SepF family. As to quaternary structure, homodimer. Interacts with FtsZ.

Its subcellular location is the cytoplasm. Cell division protein that is part of the divisome complex and is recruited early to the Z-ring. Probably stimulates Z-ring formation, perhaps through the cross-linking of FtsZ protofilaments. Its function overlaps with FtsA. The polypeptide is Cell division protein SepF (Lactobacillus helveticus (strain DPC 4571)).